The following is a 115-amino-acid chain: MNLALALMINTLLALLLMTITFWLPQLNTYMEKTNPYECGFDPLSPARIPFSMKFFLVAITFLLFDLEIALLLPLPWALQTTNPSLTIASSLTLITILILSLAYEWSQKGLDWVE.

3 consecutive transmembrane segments (helical) span residues 3 to 23, 55 to 75, and 86 to 106; these read LALA…ITFW, FFLV…LLPL, and LTIA…AYEW.

The protein belongs to the complex I subunit 3 family. Core subunit of respiratory chain NADH dehydrogenase (Complex I) which is composed of 45 different subunits. Interacts with TMEM186. Interacts with TMEM242.

Its subcellular location is the mitochondrion inner membrane. It catalyses the reaction a ubiquinone + NADH + 5 H(+)(in) = a ubiquinol + NAD(+) + 4 H(+)(out). In terms of biological role, core subunit of the mitochondrial membrane respiratory chain NADH dehydrogenase (Complex I) which catalyzes electron transfer from NADH through the respiratory chain, using ubiquinone as an electron acceptor. Essential for the catalytic activity of complex I. The sequence is that of NADH-ubiquinone oxidoreductase chain 3 from Hylobates lar (Lar gibbon).